Consider the following 128-residue polypeptide: Small ribosomal subunit protein uS9 (128 aa).

A disordered region spans residues 106-128 (PRVVERKKPGRPKARKRFQFSKR). The segment covering 113–128 (KPGRPKARKRFQFSKR) has biased composition (basic residues).

This sequence belongs to the universal ribosomal protein uS9 family.

In Porphyromonas gingivalis (strain ATCC 33277 / DSM 20709 / CIP 103683 / JCM 12257 / NCTC 11834 / 2561), this protein is Small ribosomal subunit protein uS9.